Reading from the N-terminus, the 107-residue chain is Ferredoxin Fdx8 (107 aa).

4Fe-4S ferredoxin-type domains lie at 1–31 (MAYV…GPLA) and 50–79 (LQLY…DEDE). Residues cysteine 9, cysteine 13, cysteine 17, cysteine 21, cysteine 59, cysteine 62, cysteine 65, and cysteine 69 each contribute to the [4Fe-4S] cluster site.

The cofactor is [4Fe-4S] cluster.

In terms of biological role, ferredoxins are iron-sulfur proteins that transfer electrons in a wide variety of metabolic reactions. Fdx2 can receive electrons from both FdR_A and FdR_B ferredoxin reductases, with a preference for FdR_B compared with FdR_A, and transfer the electrons to the cytochrome P450 CYP260A1. In Sorangium cellulosum (strain So ce56) (Polyangium cellulosum (strain So ce56)), this protein is Ferredoxin Fdx8.